The following is a 281-amino-acid chain: MSQQRPARKLPSLLLDPTEETVRRRCRDPINVEGLLPSKIRINLEDNVQYVSMRKALKVKRPRFDVSLVYLTRKFMDLVRSAPGGILDLNKVATKLGVRKRRVYDITNVLDGIDLVEKKSKNHIRWIGSDLSNFGAVPQQKKLQEELSDLSAMEDALDELIKDCAQQLFELTDDKENERLAYVTYQDIHSIQAFHEQIVIAVKAPAETRLDVPAPREDSITVHIRSTNGPIDVYLCEVEQGQTSNKRSEGVGTSSSESTHPEGPEEEENPQQSEELLEVSN.

A Glycyl lysine isopeptide (Lys-Gly) (interchain with G-Cter in SUMO2) cross-link involves residue Lys9. The DNA-binding element occupies 50-129 (YVSMRKALKV…SKNHIRWIGS (80 aa)). Residues 95–129 (KLGVRKRRVYDITNVLDGIDLVEKKSKNHIRWIGS) carry the DEF box motif. The dimerization stretch occupies residues 130–222 (DLSNFGAVPQ…PAPREDSITV (93 aa)). A leucine-zipper region spans residues 143-164 (LQEELSDLSAMEDALDELIKDC). The transcription repression stretch occupies residues 173-281 (DDKENERLAY…QSEELLEVSN (109 aa)). The tract at residues 241–281 (GQTSNKRSEGVGTSSSESTHPEGPEEEENPQQSEELLEVSN) is disordered.

It belongs to the E2F/DP family. Forms heterodimers with DP family members TFDP1 or TFDP2. Component of the DRTF1/E2F transcription factor complex. Part of the E2F6.com-1 complex in G0 phase composed of E2F6, MGA, MAX, TFDP1, CBX3, BAT8, EUHMTASE1, RING1, RNF2, MBLR, L3MBTL2 and YAF2. Component of some MLL1/MLL complex, at least composed of the core components KMT2A/MLL1, ASH2L, HCFC1/HCF1, WDR5 and RBBP5, as well as the facultative components BACC1, CHD8, E2F6, HSP70, INO80C, KANSL1, LAS1L, MAX, MCRS1, MGA, KAT8/MOF, PELP1, PHF20, PRP31, RING2, RUVB1/TIP49A, RUVB2/TIP49B, SENP3, TAF1, TAF4, TAF6, TAF7, TAF9 and TEX10. In terms of tissue distribution, expressed in all tissues examined. Highest levels in placenta, skeletal muscle, heart, ovary, kidney, small intestine and spleen.

It is found in the nucleus. Inhibitor of E2F-dependent transcription. Binds DNA cooperatively with DP proteins through the E2 recognition site, 5'-TTTC[CG]CGC-3'. Has a preference for the 5'-TTTCCCGC-3' E2F recognition site. E2F6 lacks the transcriptional activation and pocket protein binding domains. Appears to regulate a subset of E2F-dependent genes whose products are required for entry into the cell cycle but not for normal cell cycle progression. Represses expression of some meiosis-specific genes, including SLC25A31/ANT4. May silence expression via the recruitment of a chromatin remodeling complex containing histone H3-K9 methyltransferase activity. Overexpression delays the exit of cells from the S-phase. The chain is Transcription factor E2F6 from Homo sapiens (Human).